The sequence spans 707 residues: Zinc finger CCHC domain-containing protein 8 (707 aa).

At A2 the chain carries N-acetylalanine. The segment at 16–44 (FDHPEESIPKPVHTRFKDDDGDEEDENGV) is disordered. The segment covering 34–43 (DDGDEEDENG) has biased composition (acidic residues). A coiled-coil region spans residues 45–80 (GDAELRERLRQCEETIEQLRAENQELKRKLNILTRP). Residues 227–244 (PHCFNCGSEEHQMKDCPM) form a CCHC-type zinc finger. RBM7 binding stretches follow at residues 286 to 299 (FKPGVISEELQDAL) and 309 to 324 (FIYRMRQLGYPPGWLK). At T342 the chain carries Phosphothreonine. Disordered stretches follow at residues 409–518 (APGV…LTLE), 531–607 (LEQA…TSLC), and 641–660 (QKLFPADTSPSTATKIHSPI). K413 participates in a covalent cross-link: Glycyl lysine isopeptide (Lys-Gly) (interchain with G-Cter in SUMO2). Residues 456–465 (SQSSESFQFQ) show a composition bias toward low complexity. The span at 466 to 496 (PPLPPDTPPLPRGTPPPVFTPPLPKGTPPLT) shows a compositional bias: pro residues. Phosphothreonine occurs at positions 472, 479, and 485. At T492 the chain carries Phosphothreonine; by GSK3. Residues 516-539 (TLEELEEQQRRIWAALEQAESVNS) are a coiled coil. A compositionally biased stretch (polar residues) spans 549-559 (LTGNSVASSPC). Residue T577 is modified to Phosphothreonine. S598 is subject to Phosphoserine. Residues 598 to 607 (SPDSEVTSLC) show a composition bias toward polar residues. At T648 the chain carries Phosphothreonine. S649, S658, and S695 each carry phosphoserine. Residues 659-707 (PIPDMSKFATGITPFEFENMAESTGMYLRIRSLLKNSPRNQQKNKKASE) form an MTREX binding region.

This sequence belongs to the ZCCHC8 family. As to quaternary structure, component of a nuclear TRAMP-like complex, an ATP-dependent exosome regulatory complex consisting of a helicase (MTREX), an oligadenylate polymerase (TENT4B or TENT4A), and a substrate specific RNA-binding factor (ZCCHC7 or ZCCHC8). Several TRAMP-like complexes exist with specific compositions and are associated with nuclear, or nucleolar RNA exosomes. Identified in the spliceosome C complex. Component of the nuclear exosome targeting (NEXT) complex composed of MTREX, ZCCHC8, and RBM7 that directs a subset of non-coding short-lived RNAs for exosomal degradation. Interacts with proteins involved in RNA processing and degradation such as MTREX and RBM7; interaction with MTREX enhances MTREX RNA helicase activity and bridges between RBM7 and MTREX. Interacts with TERC, the telomerase RNA component. Post-translationally, phosphorylation at Thr-492 by GSK3 is triggered in cells entering mitosis; this phosphorylation is greatly enhanced by nocodazole treatment, but reduced by lithium.

The protein localises to the nucleus. It localises to the nucleoplasm. In terms of biological role, scaffolding subunit of the trimeric nuclear exosome targeting (NEXT) complex that is involved in the surveillance and turnover of aberrant transcripts and non-coding RNAs. NEXT functions as an RNA exosome cofactor that directs a subset of non-coding short-lived RNAs for exosomal degradation. May be involved in pre-mRNA splicing. It is required for 3'-end maturation of telomerase RNA component (TERC), TERC 3'-end targeting to the nuclear RNA exosome, and for telomerase function. The chain is Zinc finger CCHC domain-containing protein 8 (ZCCHC8) from Homo sapiens (Human).